A 211-amino-acid chain; its full sequence is MAPSRNGMILKPHFHKDWQQRVDTWFNQPARKIRRRKARQAKARRIAPRPASGPIRPIVRCPTVRYHTKVRAGRGFSLEELRVAGIHKKVARTIGISVDPRRRNKSTESLQANVQRLKEYRSKLILFPRKPSAPKKGDSSAEELKLATQLTGPVMPIRNVYKKEKARVITEEEKNFKAFASLRMARANARLFGIRAKRAKEAAEQDVEKKK.

At Lys-16 the chain carries N6-acetyllysine. A phosphoserine mark is found at Ser-52, Ser-77, and Ser-106. Residues Lys-123 and Lys-145 each participate in a glycyl lysine isopeptide (Lys-Gly) (interchain with G-Cter in SUMO2) cross-link. A Glycyl lysine isopeptide (Lys-Gly) (interchain with G-Cter in SUMO1); alternate cross-link involves residue Lys-174. Glycyl lysine isopeptide (Lys-Gly) (interchain with G-Cter in SUMO2); alternate cross-links involve residues Lys-174 and Lys-177. Lys-177 is subject to N6-acetyllysine; alternate.

This sequence belongs to the eukaryotic ribosomal protein eL13 family. As to quaternary structure, component of the large ribosomal subunit.

Its subcellular location is the cytoplasm. Component of the large ribosomal subunit. The ribosome is a large ribonucleoprotein complex responsible for the synthesis of proteins in the cell. In Mus musculus (Mouse), this protein is Large ribosomal subunit protein eL13 (Rpl13).